A 42-amino-acid chain; its full sequence is Potassium channel toxin gamma-KTx 1.5 (42 aa).

Intrachain disulfides connect Cys5-Cys23, Cys11-Cys34, Cys20-Cys39, and Cys24-Cys41.

It belongs to the ergtoxin family. Gamma-KTx 1 subfamily. Expressed by the venom gland.

The protein resides in the secreted. In terms of biological role, blocks Kv11/ERG potassium channels. The chain is Potassium channel toxin gamma-KTx 1.5 from Centruroides limpidus (Mexican scorpion).